A 1247-amino-acid chain; its full sequence is uncharacterized protein (1247 aa).

Disordered regions lie at residues 25-141, 169-431, 472-667, 738-770, 807-857, 869-1087, 1099-1122, and 1139-1162; these read KYNN…HSPP, AANN…QQPQ, QQQP…PSSS, NSNSFNNGDNNNNNNNNNNNNHHNNDIDDSEPI, YSNR…QNIE, GKNF…NNNN, STLNNSQDDSYQQEQEQQEQESQQ, and QQQQQQQNYSSTPPNITPHLKGDG. Positions 26 to 125 are enriched in low complexity; the sequence is YNNSNNYNNN…SNNSINSNSY (100 aa). The span at 126-139 shows a compositional bias: polar residues; sequence KVNTPTQNGKSSHS. Low complexity-rich tracts occupy residues 169 to 178, 185 to 223, and 230 to 341; these read AANNGSSNSS, SNSNTMNNNNNNNNNNNNNSNSSNNNNNGNNNNNNNYNS, and NNNN…YSNS. Positions 342 to 356 are enriched in polar residues; it reads KYNQQKSYNNAPHQL. Low complexity-rich tracts occupy residues 363 to 375, 385 to 394, 409 to 431, and 472 to 484; these read NSYYNKNNYNNGN, GSGNSSNSNG, QSQSQQQPQQQQQQQPQQPQQPQ, and QQQPPQQQQQQQQ. Over residues 511–522 the composition is skewed to polar residues; sequence GLNNSLNGQTDL. Composition is skewed to low complexity over residues 523–544, 553–628, 655–667, 738–759, 807–855, and 871–928; these read NNSNYNSNSNNNNTNNNNTNNN, YNYN…VGSN, TPSSSTTTSPSSS, NSNSFNNGDNNNNNNNNNNNNH, YSNR…DSQN, and NFNN…ENNN. Over residues 929–942 the composition is skewed to polar residues; sequence GDVFSNGFSTWTPK. Residues 943–983 are compositionally biased toward low complexity; sequence SGSNSLNNSQNNLSNGQNSSNNSQNNLNNSQNSLNSSGNHH. Residues 984 to 995 are compositionally biased toward basic residues; the sequence is SNYHGHNNHHHY. Low complexity predominate over residues 996-1021; that stretch reads NNNNNNNNNNNNNNNNNNNNNNNGNG. Residues 1026–1044 are compositionally biased toward polar residues; the sequence is YYNNKYQQKSPQHQSSNSV. Residues 1047-1060 are compositionally biased toward pro residues; sequence IPPPGFSTIAPPPG. The span at 1064 to 1087 shows a compositional bias: low complexity; it reads NNNNNNNNNNNNNNNKNNNSNNNN. A compositionally biased stretch (polar residues) spans 1099-1108; sequence STLNNSQDDS. Residues 1110–1122 are compositionally biased toward low complexity; the sequence is QQEQEQQEQESQQ.

This is an uncharacterized protein from Dictyostelium discoideum (Social amoeba).